Consider the following 143-residue polypeptide: Peptide methionine sulfoxide reductase MsrB (143 aa).

The MsrB domain maps to 16 to 139 (DAELRRRLTP…NSAALNFESR (124 aa)). Zn(2+)-binding residues include Cys55, Cys58, Cys104, and Cys107. Cys128 (nucleophile) is an active-site residue.

The protein belongs to the MsrB Met sulfoxide reductase family. The cofactor is Zn(2+).

It catalyses the reaction L-methionyl-[protein] + [thioredoxin]-disulfide + H2O = L-methionyl-(R)-S-oxide-[protein] + [thioredoxin]-dithiol. This is Peptide methionine sulfoxide reductase MsrB from Burkholderia cenocepacia (strain HI2424).